The chain runs to 485 residues: Putative E3 ubiquitin-protein ligase makorin-4 (485 aa).

Low complexity predominate over residues 1-32; that stretch reads MAEAAAPGTTVTTSGAGAAAAEAAETAEAVSP. The segment at 1–63 is disordered; that stretch reads MAEAAAPGTT…GSDGSGGRGD (63 aa). The segment covering 45–63 has biased composition (gly residues); that stretch reads AGGGVGGSDGSDGSGGRGD. 3 C3H1-type zinc fingers span residues 90–117, 124–146, and 243–270; these read WTKQ…HDLS, VCKY…HSKP, and ETKK…HGDL. The makorin-type Cys-His stretch occupies residues 271 to 298; the sequence is CDMCGLQVLHPMDAAQRSQHIQACIEAH. An RING-type zinc finger spans residues 316–370; that stretch reads CGICMEVVYEKANPNEHRFGILSNCNHTFCLKCIRKWRSAKEFESRIVKSCPQCR. The segment at 399-428 adopts a C3H1-type 4 zinc-finger fold; sequence AMSNKACKYFDEGRGSCPFGENCFYKHMYP.

The catalysed reaction is S-ubiquitinyl-[E2 ubiquitin-conjugating enzyme]-L-cysteine + [acceptor protein]-L-lysine = [E2 ubiquitin-conjugating enzyme]-L-cysteine + N(6)-ubiquitinyl-[acceptor protein]-L-lysine.. It participates in protein modification; protein ubiquitination. Its function is as follows. May act as a E3 ubiquitin ligase catalyzing the covalent attachment of ubiquitin moieties onto substrate proteins. This is Putative E3 ubiquitin-protein ligase makorin-4 (MKRN4P) from Homo sapiens (Human).